A 326-amino-acid chain; its full sequence is Ribose operon repressor (326 aa).

Residues 1–56 enclose the HTH lacI-type domain; that stretch reads MATIKDVAGAAGVSVATVSRNLNDNGYVHEETRTRVIAAMAKLNYYPNEVARSLYK. Positions 4-23 form a DNA-binding region, H-T-H motif; it reads IKDVAGAAGVSVATVSRNLN.

Its function is as follows. Transcriptional repressor for the ribose rbsDACBK operon. The polypeptide is Ribose operon repressor (rbsR) (Bacillus subtilis (strain 168)).